We begin with the raw amino-acid sequence, 305 residues long: N-acetylmuramic acid 6-phosphate etherase (305 aa).

Positions Ile61–Lys224 constitute an SIS domain. The active-site Proton donor is the Glu89. Glu120 is a catalytic residue.

Belongs to the GCKR-like family. MurNAc-6-P etherase subfamily. As to quaternary structure, homodimer.

The enzyme catalyses N-acetyl-D-muramate 6-phosphate + H2O = N-acetyl-D-glucosamine 6-phosphate + (R)-lactate. The protein operates within amino-sugar metabolism; N-acetylmuramate degradation. Functionally, specifically catalyzes the cleavage of the D-lactyl ether substituent of MurNAc 6-phosphate, producing GlcNAc 6-phosphate and D-lactate. In Synechocystis sp. (strain ATCC 27184 / PCC 6803 / Kazusa), this protein is N-acetylmuramic acid 6-phosphate etherase.